Consider the following 212-residue polypeptide: 2-dehydro-3-deoxy-phosphogluconate aldolase (212 aa).

E45 functions as the Proton acceptor in the catalytic mechanism. R49, T73, and K133 together coordinate pyruvate. K133 serves as the catalytic Schiff-base intermediate with substrate.

This sequence belongs to the KHG/KDPG aldolase family. As to quaternary structure, homotrimer.

The protein resides in the cytoplasm. The enzyme catalyses 2-dehydro-3-deoxy-6-phospho-D-gluconate = D-glyceraldehyde 3-phosphate + pyruvate. The protein operates within carbohydrate acid metabolism; 2-dehydro-3-deoxy-D-gluconate degradation; D-glyceraldehyde 3-phosphate and pyruvate from 2-dehydro-3-deoxy-D-gluconate: step 2/2. Involved in the degradation of glucose via the Entner-Doudoroff pathway. Catalyzes the reversible, stereospecific retro-aldol cleavage of 2-keto-3-deoxy-6-phosphogluconate (KDPG) to pyruvate and D-glyceraldehyde-3-phosphate. This Haemophilus influenzae (strain ATCC 51907 / DSM 11121 / KW20 / Rd) protein is 2-dehydro-3-deoxy-phosphogluconate aldolase (eda).